The sequence spans 605 residues: MVEGPGCTLNGEKIRARVLPGQAVTGVRGSALRSLQGRALRLAASTVVVSPQAAALNNDSSQNVLSLFNGYVYSGVETLGKELFMYFGPKALRIHFGMKGFIMINPLEYKYKNGASPVLEVQLTKDLICFFDSSVELRNSMESQQRIRMMKELDVCSPEFSFLRAESEVKKQKGRMLGDVLMDQNVLPGVGNIIKNEALFDSGLHPAVKVCQLTDEQIHHLMKMIRDFSILFYRCRKAGLALSKHYKVYKRPNCGQCHCRITVCRFGDNNRMTYFCPHCQKENPQHVDICKLPTRNTIISWTSSRVDHVMDSVARKSEEHWTCVVCTLINKPSSKACDACLTSRPIDSVLKSEENSTVFSHLMKYPCNTFGKPHTEVKINRKTAFGTTTLVLTDFSNKSSTLERKTKQNQILDEEFQNSPPASVCLNDIQHPSKKTTNDITQPSSKVNISPTISSESKLFSPAHKKPKTAQYSSPELKSCNPGYSNSELQINMTDGPRTLNPDSPRCSKHNRLCILRVVGKDGENKGRQFYACPLPREAQCGFFEWADLSFPFCNHGKRSTMKTVLKIGPNNGKNFFVCPLGKEKQCNFFQWAENGPGIKIIPGC.

Catalysis depends on Val-2, which acts as the Schiff-base intermediate with DNA; via amino nitrogen. DNA is bound by residues Asn-192 and Arg-271. The FPG-type zinc finger occupies 247–281 (KVYKRPNCGQCHCRITVCRFGDNNRMTYFCPHCQK). The RanBP2-type zinc-finger motif lies at 317–346 (SEEHWTCVVCTLINKPSSKACDACLTSRPI). A Phosphoserine modification is found at Ser-450. A disordered region spans residues 456–477 (ESKLFSPAHKKPKTAQYSSPEL). Residues Cys-507, His-510, Cys-533, Cys-541, Cys-554, His-556, Cys-579, and Cys-587 each coordinate Zn(2+). 2 GRF-type zinc fingers span residues 507–550 (CSKH…ADLS) and 554–596 (CNHG…AENG).

The protein belongs to the FPG family. In terms of tissue distribution, expressed in keratinocytes and embryonic fibroblasts (at protein level). Also detected in thymus, testis and fetal lung primary fibroblasts.

It localises to the nucleus. Its subcellular location is the chromosome. It carries out the reaction 2'-deoxyribonucleotide-(2'-deoxyribose 5'-phosphate)-2'-deoxyribonucleotide-DNA = a 3'-end 2'-deoxyribonucleotide-(2,3-dehydro-2,3-deoxyribose 5'-phosphate)-DNA + a 5'-end 5'-phospho-2'-deoxyribonucleoside-DNA + H(+). In terms of biological role, DNA glycosylase which prefers single-stranded DNA (ssDNA), or partially ssDNA structures such as bubble and fork structures, to double-stranded DNA (dsDNA). Mediates interstrand cross-link repair in response to replication stress: acts by mediating DNA glycosylase activity, cleaving one of the two N-glycosyl bonds comprising the interstrand cross-link, which avoids the formation of a double-strand break but generates an abasic site that is bypassed by translesion synthesis polymerases. In vitro, displays strong glycosylase activity towards the hydantoin lesions spiroiminodihydantoin (Sp) and guanidinohydantoin (Gh) in both ssDNA and dsDNA; also recognizes FapyA, FapyG, 5-OHU, 5-OHC, 5-OHMH, Tg and 8-oxoA lesions in ssDNA. No activity on 8-oxoG detected. Also shows weak DNA-(apurinic or apyrimidinic site) lyase activity. In vivo, appears to be the primary enzyme involved in removing Sp and Gh from ssDNA in neonatal tissues. This Homo sapiens (Human) protein is Endonuclease 8-like 3 (NEIL3).